Reading from the N-terminus, the 551-residue chain is HTH-type transcriptional regulator SgrR (551 aa).

Residues 1 to 116 (MPSARLQQQF…LVSHLGRSFR (116 aa)) form the HTH marR-type domain. Residues 26-49 (LNELAALLSCSRRHMRTLLNTMQD) constitute a DNA-binding region (H-T-H motif). A solute-binding region spans residues 163 to 492 (ELEADIAHHW…IDWQADAARW (330 aa)).

Functionally, activates the small RNA gene sgrS under glucose-phosphate stress conditions as well as yfdZ. Represses its own transcription under both stress and non-stress conditions. Might act as a sensor of the intracellular accumulation of phosphoglucose by binding these molecules in its C-terminal solute-binding domain. In Escherichia coli O6:K15:H31 (strain 536 / UPEC), this protein is HTH-type transcriptional regulator SgrR.